The following is a 207-amino-acid chain: Cytochrome c biogenesis ATP-binding export protein CcmA (207 aa).

One can recognise an ABC transporter domain in the interval 6-207; it reads LCAEGLECIR…RGDCRSLNLS (202 aa). 38–45 serves as a coordination point for ATP; that stretch reads GANGAGKT.

The protein belongs to the ABC transporter superfamily. CcmA exporter (TC 3.A.1.107) family. As to quaternary structure, the complex is composed of two ATP-binding proteins (CcmA) and two transmembrane proteins (CcmB).

Its subcellular location is the cell inner membrane. The enzyme catalyses heme b(in) + ATP + H2O = heme b(out) + ADP + phosphate + H(+). Its function is as follows. Part of the ABC transporter complex CcmAB involved in the biogenesis of c-type cytochromes; once thought to export heme, this seems not to be the case, but its exact role is uncertain. Responsible for energy coupling to the transport system. The sequence is that of Cytochrome c biogenesis ATP-binding export protein CcmA from Methylococcus capsulatus (strain ATCC 33009 / NCIMB 11132 / Bath).